Reading from the N-terminus, the 380-residue chain is Lipoyl synthase, mitochondrial (380 aa).

7 residues coordinate [4Fe-4S] cluster: Cys104, Cys109, Cys115, Cys135, Cys139, Cys142, and Ser350. Positions 120–339 (EHGTQTATIM…ETRGNELGFL (220 aa)) constitute a Radical SAM core domain.

This sequence belongs to the radical SAM superfamily. Lipoyl synthase family. [4Fe-4S] cluster serves as cofactor.

The protein localises to the mitochondrion. The catalysed reaction is [[Fe-S] cluster scaffold protein carrying a second [4Fe-4S](2+) cluster] + N(6)-octanoyl-L-lysyl-[protein] + 2 oxidized [2Fe-2S]-[ferredoxin] + 2 S-adenosyl-L-methionine + 4 H(+) = [[Fe-S] cluster scaffold protein] + N(6)-[(R)-dihydrolipoyl]-L-lysyl-[protein] + 4 Fe(3+) + 2 hydrogen sulfide + 2 5'-deoxyadenosine + 2 L-methionine + 2 reduced [2Fe-2S]-[ferredoxin]. Its pathway is protein modification; protein lipoylation via endogenous pathway; protein N(6)-(lipoyl)lysine from octanoyl-[acyl-carrier-protein]: step 2/2. Its function is as follows. Catalyzes the radical-mediated insertion of two sulfur atoms into the C-6 and C-8 positions of the octanoyl moiety bound to the lipoyl domains of lipoate-dependent enzymes, thereby converting the octanoylated domains into lipoylated derivatives. The polypeptide is Lipoyl synthase, mitochondrial (Culex quinquefasciatus (Southern house mosquito)).